The chain runs to 116 residues: Beta-2-microglobulin (116 aa).

The signal sequence occupies residues 1–19 (MKFLLSFVVLAVFSASAFA). Residues 24–111 (PKIQVYSRNP…RHLKETKNIS (88 aa)) enclose the Ig-like C1-type domain. A disulfide bridge links C44 with C99.

This sequence belongs to the beta-2-microglobulin family. As to quaternary structure, heterodimer of an alpha chain and a beta chain. Beta-2-microglobulin is the beta-chain of major histocompatibility complex class I molecules.

The protein resides in the secreted. Its function is as follows. Component of the class I major histocompatibility complex (MHC). Involved in the presentation of peptide antigens to the immune system. This is Beta-2-microglobulin (b2m) from Ictalurus punctatus (Channel catfish).